Reading from the N-terminus, the 80-residue chain is Exodeoxyribonuclease 7 small subunit (80 aa).

It belongs to the XseB family. Heterooligomer composed of large and small subunits.

It localises to the cytoplasm. The catalysed reaction is Exonucleolytic cleavage in either 5'- to 3'- or 3'- to 5'-direction to yield nucleoside 5'-phosphates.. In terms of biological role, bidirectionally degrades single-stranded DNA into large acid-insoluble oligonucleotides, which are then degraded further into small acid-soluble oligonucleotides. The protein is Exodeoxyribonuclease 7 small subunit of Aliivibrio salmonicida (strain LFI1238) (Vibrio salmonicida (strain LFI1238)).